A 324-amino-acid chain; its full sequence is Beta-ketoacyl-[acyl-carrier-protein] synthase III (324 aa).

Residues Cys-112 and His-251 contribute to the active site. The segment at 252-256 (QANIR) is ACP-binding. Residue Asn-281 is part of the active site.

Belongs to the thiolase-like superfamily. FabH family. Homodimer.

The protein resides in the cytoplasm. It carries out the reaction malonyl-[ACP] + acetyl-CoA + H(+) = 3-oxobutanoyl-[ACP] + CO2 + CoA. The protein operates within lipid metabolism; fatty acid biosynthesis. Catalyzes the condensation reaction of fatty acid synthesis by the addition to an acyl acceptor of two carbons from malonyl-ACP. Catalyzes the first condensation reaction which initiates fatty acid synthesis and may therefore play a role in governing the total rate of fatty acid production. Possesses both acetoacetyl-ACP synthase and acetyl transacylase activities. Its substrate specificity determines the biosynthesis of branched-chain and/or straight-chain of fatty acids. The sequence is that of Beta-ketoacyl-[acyl-carrier-protein] synthase III from Desulfotalea psychrophila (strain LSv54 / DSM 12343).